We begin with the raw amino-acid sequence, 167 residues long: Aphrodisin (167 aa).

A signal peptide spans 1-16 (MVKILVLALVFSLAHA). At glutamine 17 the chain carries Pyrrolidone carboxylic acid. Disulfide bonds link cysteine 54-cysteine 58 and cysteine 73-cysteine 165. 2 N-linked (GlcNAc...) asparagine glycosylation sites follow: asparagine 57 and asparagine 85.

This sequence belongs to the calycin superfamily. Lipocalin family. In terms of tissue distribution, expressed in the vagina, uterus, and Bartholin's glands of female hamsters. Secreted in vaginal discharge.

It localises to the secreted. Its function is as follows. Acts as an aphrodisiac pheromone, reliably eliciting copulatory behavior from male hamster. The polypeptide is Aphrodisin (Mesocricetus auratus (Golden hamster)).